The following is a 285-amino-acid chain: Putative quercetin 2,3-dioxygenase PA3240 (285 aa).

Positions 60, 62, 104, and 106 each coordinate a divalent metal cation.

It belongs to the pirin family. Requires a divalent metal cation as cofactor.

It carries out the reaction quercetin + O2 = 2-(3,4-dihydroxybenzoyloxy)-4,6-dihydroxybenzoate + CO. It functions in the pathway flavonoid metabolism; quercetin degradation. Its function is as follows. Putative quercetin 2,3-dioxygenase. This Pseudomonas aeruginosa (strain ATCC 15692 / DSM 22644 / CIP 104116 / JCM 14847 / LMG 12228 / 1C / PRS 101 / PAO1) protein is Putative quercetin 2,3-dioxygenase PA3240.